We begin with the raw amino-acid sequence, 1060 residues long: Carbamoyl phosphate synthase large chain (1060 aa).

Residues 1–401 are carboxyphosphate synthetic domain; sequence MPKRQDIHKI…SLLKAVRSLE (401 aa). 12 residues coordinate ATP: R129, R169, G175, G176, R208, I210, E215, G241, V242, H243, Q284, and E298. Positions 133–327 constitute an ATP-grasp 1 domain; it reads KNLMQKLHEP…IAKMAAKIAV (195 aa). Residues Q284, E298, and N300 each contribute to the Mg(2+) site. 3 residues coordinate Mn(2+): Q284, E298, and N300. Residues 402 to 546 form an oligomerization domain region; it reads VGLIHPERPA…YSTYESSTES (145 aa). A carbamoyl phosphate synthetic domain region spans residues 547-929; that stretch reads VKSDKPSVLV…ALYKAFEAAG (383 aa). The ATP-grasp 2 domain maps to 671 to 861; that stretch reads DQVIKSLKLP…LAQVATLAIL (191 aa). Residues R707, H746, L748, E752, G777, I778, H779, S780, Q820, and E832 each coordinate ATP. Q820, E832, and N834 together coordinate Mg(2+). 3 residues coordinate Mn(2+): Q820, E832, and N834. The MGS-like domain occupies 930 to 1060; that stretch reads MHLPQFGRAL…QAFSISPIKS (131 aa). The segment at 930 to 1060 is allosteric domain; the sequence is MHLPQFGRAL…QAFSISPIKS (131 aa).

Belongs to the CarB family. Composed of two chains; the small (or glutamine) chain promotes the hydrolysis of glutamine to ammonia, which is used by the large (or ammonia) chain to synthesize carbamoyl phosphate. Tetramer of heterodimers (alpha,beta)4. Requires Mg(2+) as cofactor. It depends on Mn(2+) as a cofactor.

The enzyme catalyses hydrogencarbonate + L-glutamine + 2 ATP + H2O = carbamoyl phosphate + L-glutamate + 2 ADP + phosphate + 2 H(+). It catalyses the reaction hydrogencarbonate + NH4(+) + 2 ATP = carbamoyl phosphate + 2 ADP + phosphate + 2 H(+). It functions in the pathway amino-acid biosynthesis; L-arginine biosynthesis; carbamoyl phosphate from bicarbonate: step 1/1. Its pathway is pyrimidine metabolism; UMP biosynthesis via de novo pathway; (S)-dihydroorotate from bicarbonate: step 1/3. Its function is as follows. Large subunit of the glutamine-dependent carbamoyl phosphate synthetase (CPSase). CPSase catalyzes the formation of carbamoyl phosphate from the ammonia moiety of glutamine, carbonate, and phosphate donated by ATP, constituting the first step of 2 biosynthetic pathways, one leading to arginine and/or urea and the other to pyrimidine nucleotides. The large subunit (synthetase) binds the substrates ammonia (free or transferred from glutamine from the small subunit), hydrogencarbonate and ATP and carries out an ATP-coupled ligase reaction, activating hydrogencarbonate by forming carboxy phosphate which reacts with ammonia to form carbamoyl phosphate. This chain is Carbamoyl phosphate synthase large chain, found in Lacticaseibacillus casei (strain BL23) (Lactobacillus casei).